The chain runs to 275 residues: Urease accessory protein UreD (275 aa).

It belongs to the UreD family. In terms of assembly, ureD, UreF and UreG form a complex that acts as a GTP-hydrolysis-dependent molecular chaperone, activating the urease apoprotein by helping to assemble the nickel containing metallocenter of UreC. The UreE protein probably delivers the nickel.

It localises to the cytoplasm. Its function is as follows. Required for maturation of urease via the functional incorporation of the urease nickel metallocenter. The protein is Urease accessory protein UreD of Cereibacter sphaeroides (strain ATCC 17029 / ATH 2.4.9) (Rhodobacter sphaeroides).